A 205-amino-acid chain; its full sequence is Small ribosomal subunit protein uS5 (205 aa).

The 64-residue stretch at Leu49 to Val112 folds into the S5 DRBM domain.

Belongs to the universal ribosomal protein uS5 family. Part of the 30S ribosomal subunit. Contacts protein S4.

Its function is as follows. With S4 and S12 plays an important role in translational accuracy. The sequence is that of Small ribosomal subunit protein uS5 from Methanoregula boonei (strain DSM 21154 / JCM 14090 / 6A8).